A 392-amino-acid polypeptide reads, in one-letter code: Cellobiose 2-epimerase (392 aa).

Belongs to the cellobiose 2-epimerase family.

It carries out the reaction D-cellobiose = beta-D-glucosyl-(1-&gt;4)-D-mannopyranose. In terms of biological role, catalyzes the reversible epimerization of cellobiose to 4-O-beta-D-glucopyranosyl-D-mannose (Glc-Man). Can also epimerize cellotriose to Glc-Glc-Man, cellotetraose to Glc-Glc-Glc-Man, lactose to epilactose, and mannobiose to 4-O-beta-D-mannopyranosyl-D-glucopyranose (Man-Glc). May function as a mannobiose 2-epimerase in vivo and be involved in a mannan catabolic pathway which feeds into glycolysis. In Bacteroides fragilis (strain ATCC 25285 / DSM 2151 / CCUG 4856 / JCM 11019 / LMG 10263 / NCTC 9343 / Onslow / VPI 2553 / EN-2), this protein is Cellobiose 2-epimerase (bfce).